The primary structure comprises 257 residues: Probable 6-phosphogluconolactonase (257 aa).

The protein belongs to the glucosamine/galactosamine-6-phosphate isomerase family. 6-phosphogluconolactonase subfamily.

The enzyme catalyses 6-phospho-D-glucono-1,5-lactone + H2O = 6-phospho-D-gluconate + H(+). It functions in the pathway carbohydrate degradation; pentose phosphate pathway; D-ribulose 5-phosphate from D-glucose 6-phosphate (oxidative stage): step 2/3. Functionally, hydrolysis of 6-phosphogluconolactone to 6-phosphogluconate. In Schizosaccharomyces pombe (strain 972 / ATCC 24843) (Fission yeast), this protein is Probable 6-phosphogluconolactonase.